Here is a 315-residue protein sequence, read N- to C-terminus: Tyrosine recombinase XerC (315 aa).

One can recognise a Core-binding (CB) domain in the interval Pro14–Gln105. Residues Ser126–Asp309 form the Tyr recombinase domain. Active-site residues include Arg169, Lys193, His261, Arg264, and His287. The active-site O-(3'-phospho-DNA)-tyrosine intermediate is the Tyr296.

Belongs to the 'phage' integrase family. XerC subfamily. In terms of assembly, forms a cyclic heterotetrameric complex composed of two molecules of XerC and two molecules of XerD.

The protein localises to the cytoplasm. Site-specific tyrosine recombinase, which acts by catalyzing the cutting and rejoining of the recombining DNA molecules. The XerC-XerD complex is essential to convert dimers of the bacterial chromosome into monomers to permit their segregation at cell division. It also contributes to the segregational stability of plasmids. The polypeptide is Tyrosine recombinase XerC (Agrobacterium fabrum (strain C58 / ATCC 33970) (Agrobacterium tumefaciens (strain C58))).